The primary structure comprises 126 residues: Large ribosomal subunit protein bL12 (126 aa).

The protein belongs to the bacterial ribosomal protein bL12 family. As to quaternary structure, homodimer. Part of the ribosomal stalk of the 50S ribosomal subunit. Forms a multimeric L10(L12)X complex, where L10 forms an elongated spine to which 2 to 4 L12 dimers bind in a sequential fashion. Binds GTP-bound translation factors.

Its function is as follows. Forms part of the ribosomal stalk which helps the ribosome interact with GTP-bound translation factors. Is thus essential for accurate translation. The sequence is that of Large ribosomal subunit protein bL12 from Tropheryma whipplei (strain TW08/27) (Whipple's bacillus).